Here is a 291-residue protein sequence, read N- to C-terminus: MQQIHRLERKLLRATAEAIRDFDLVSQGDRIMVAVSGGKDSYTLLHLLMRLRERAPIDFDLVAVNLDQGQPGFPAQVVEDHLRSVGVPYRMLQRDTYSVVRRLVPEGKTTCPVCSRLRRGVLYNAAVEMGCTKIALGHHRDDLVETLLLSALYSGALKSMPPKLRSRDGRNVVVRPLCYAAEEDVAAFAEAMRFPIVPCDLCGSQPNLRRKRVKRLLAELSAEHPAVKGNLLHALAHVVPSHLLDRDLHRQLADATGRDPWLDAEDEEAEDCGEPSAGDGVVSLGGARGGR.

The PP-loop motif signature appears at 36 to 41 (SGGKDS). [4Fe-4S] cluster-binding residues include cysteine 111, cysteine 114, and cysteine 202. The disordered stretch occupies residues 259–291 (DPWLDAEDEEAEDCGEPSAGDGVVSLGGARGGR). Acidic residues predominate over residues 262–273 (LDAEDEEAEDCG).

It belongs to the TtcA family. Homodimer. Mg(2+) serves as cofactor. Requires [4Fe-4S] cluster as cofactor.

Its subcellular location is the cytoplasm. It catalyses the reaction cytidine(32) in tRNA + S-sulfanyl-L-cysteinyl-[cysteine desulfurase] + AH2 + ATP = 2-thiocytidine(32) in tRNA + L-cysteinyl-[cysteine desulfurase] + A + AMP + diphosphate + H(+). It participates in tRNA modification. Catalyzes the ATP-dependent 2-thiolation of cytidine in position 32 of tRNA, to form 2-thiocytidine (s(2)C32). The sulfur atoms are provided by the cysteine/cysteine desulfurase (IscS) system. This is tRNA-cytidine(32) 2-sulfurtransferase from Anaeromyxobacter sp. (strain K).